A 362-amino-acid chain; its full sequence is tRNA-specific 2-thiouridylase MnmA 3 (362 aa).

Residues Gly11–Ser18 and Met37 contribute to the ATP site. Cys91 functions as the Nucleophile in the catalytic mechanism. Cys91 and Cys188 are joined by a disulfide. Residue Gly115 participates in ATP binding. The interval Lys137–Gln139 is interaction with tRNA. Cys188 acts as the Cysteine persulfide intermediate in catalysis. The interaction with tRNA stretch occupies residues Arg296–Tyr297.

Belongs to the MnmA/TRMU family.

The protein resides in the cytoplasm. It catalyses the reaction S-sulfanyl-L-cysteinyl-[protein] + uridine(34) in tRNA + AH2 + ATP = 2-thiouridine(34) in tRNA + L-cysteinyl-[protein] + A + AMP + diphosphate + H(+). Catalyzes the 2-thiolation of uridine at the wobble position (U34) of tRNA, leading to the formation of s(2)U34. The chain is tRNA-specific 2-thiouridylase MnmA 3 from Bacteroides fragilis (strain ATCC 25285 / DSM 2151 / CCUG 4856 / JCM 11019 / LMG 10263 / NCTC 9343 / Onslow / VPI 2553 / EN-2).